The chain runs to 301 residues: Protein FdhE homolog (301 aa).

This sequence belongs to the FdhE family.

It localises to the cytoplasm. Its function is as follows. Necessary for formate dehydrogenase activity. This chain is Protein FdhE homolog, found in Erwinia tasmaniensis (strain DSM 17950 / CFBP 7177 / CIP 109463 / NCPPB 4357 / Et1/99).